Reading from the N-terminus, the 123-residue chain is DNA-directed RNA polymerase I subunit RPA12 (123 aa).

Zn(2+)-binding residues include cysteine 17, cysteine 20, cysteine 35, cysteine 38, cysteine 84, and cysteine 87. The C4-type zinc-finger motif lies at 17-38; that stretch reads CPDCGSVLPLPGVQDAVACTRC. The TFIIS-type zinc finger occupies 80–120; that stretch reads VDRRCSRCGHEGMAYHTRQMRSADEGQTVFYTCTNCKFQEK. The Hairpin signature appears at 103–104; that stretch reads DE. Zn(2+)-binding residues include cysteine 112 and cysteine 115.

This sequence belongs to the archaeal RpoM/eukaryotic RPA12/RPB9/RPC11 RNA polymerase family. Component of the RNA polymerase I (Pol I) complex consisting of at least 13 subunits.

It is found in the nucleus. The protein resides in the nucleolus. Its function is as follows. Core component of RNA polymerase I (Pol I), a DNA-dependent RNA polymerase which synthesizes ribosomal RNA precursors using the four ribonucleoside triphosphates as substrates. Can mediate Pol I proofreading of the nascent RNA transcript. Anchors into the Pol I active site to monitor transcription fidelity and cleave mis-incorporated 5'-ribonucleotides. The polypeptide is DNA-directed RNA polymerase I subunit RPA12 (Bos taurus (Bovine)).